The chain runs to 115 residues: Meromycolate extension acyl carrier protein (115 aa).

A Carrier domain is found at 3 to 81 (VTQEEIIAGI…DVVTYIQKLE (79 aa)). S41 carries the O-(pantetheine 4'-phosphoryl)serine modification.

It belongs to the acyl carrier protein (ACP) family. 4'-phosphopantetheine is transferred from CoA to a specific serine of apo-AcpM.

Its subcellular location is the cytoplasm. Functionally, acyl carrier protein involved in meromycolate extension. The chain is Meromycolate extension acyl carrier protein (acpM) from Mycobacterium leprae (strain TN).